The chain runs to 237 residues: Peroxisomal membrane protein 11-1 (237 aa).

Residues 1 to 92 (MSTLDATRAE…TLVLLGKSKN (92 aa)) are Cytoplasmic-facing. A helical transmembrane segment spans residues 93–113 (ALLSTFLFLDQFVWLGRTGIY). Over 114 to 204 (KNKERTDRIV…VGLLQLSPKK (91 aa)) the chain is Lumenal. Residues 205–223 (ITPRVTGAFGFVTSLISCY) form a helical membrane-spanning segment. Residues 224 to 237 (QQLPSRAPAIKVKA) lie on the Cytoplasmic side of the membrane.

This sequence belongs to the peroxin-11 family. In terms of tissue distribution, expressed in seedlings, leaf sheaths, flag leaf, panicles and spikelets.

The protein localises to the peroxisome membrane. In terms of biological role, involved in peroxisomal proliferation. The chain is Peroxisomal membrane protein 11-1 (PEX11-1) from Oryza sativa subsp. japonica (Rice).